We begin with the raw amino-acid sequence, 269 residues long: MRTAFYISDGTAITSEVFGHATLSLFPVEFNHKTIPFVETEEKAHQIKELINATAKRDGEKPLIFFTFVNYNLTEIISSANAVCYDFLTTYSEKIEKELNVAPVPKIHRTHSIHEKSYDFRIDAVNYALMNDDGGNIKNYGEADIILIGVSRSGKTPTSLYLALQYGIKAANYPITEDDLETEGLPKCLIPFKHKLFGLTIDPERLAAIRDRRMANSKYASIRQCRIEVREVEMLYKRNRIPFLNSTHHSVEEISAKIISDTDLERRKY.

149–156 (GVSRSGKT) is an ADP binding site.

Belongs to the pyruvate, phosphate/water dikinase regulatory protein family. PSRP subfamily.

It carries out the reaction [pyruvate, water dikinase] + ADP = [pyruvate, water dikinase]-phosphate + AMP + H(+). It catalyses the reaction [pyruvate, water dikinase]-phosphate + phosphate + H(+) = [pyruvate, water dikinase] + diphosphate. In terms of biological role, bifunctional serine/threonine kinase and phosphorylase involved in the regulation of the phosphoenolpyruvate synthase (PEPS) by catalyzing its phosphorylation/dephosphorylation. The sequence is that of Putative phosphoenolpyruvate synthase regulatory protein from Pseudoalteromonas translucida (strain TAC 125).